The chain runs to 65 residues: Antimicrobial peptide 1 (65 aa).

The N-terminal stretch at 1 to 27 (MAKVSSAYLKFALVMILLLSVISAVMS) is a signal peptide. 3 disulfides stabilise this stretch: C30–C47, C37–C51, and C46–C62.

This sequence belongs to the AMP family. In terms of tissue distribution, seed specific.

The protein localises to the secreted. Its function is as follows. Possesses antifungal activity. This chain is Antimicrobial peptide 1, found in Phytolacca americana (American pokeweed).